A 304-amino-acid chain; its full sequence is Thiosulfate sulfurtransferase TUM1 (304 aa).

Rhodanese domains follow at residues 20–137 (KVHR…PLDS) and 177–299 (LAKK…PEWI). A compositionally biased stretch (basic and acidic residues) spans 191–201 (RFEGTEPEPRS). The segment at 191-222 (RFEGTEPEPRSDIPSGHIPGTQPLPYGSLLDP) is disordered. A Phosphoserine modification is found at Ser201. The active-site Cysteine persulfide intermediate is the Cys259. At Ser264 the chain carries Phosphoserine.

The protein localises to the mitochondrion. It localises to the cytoplasm. The enzyme catalyses thiosulfate + hydrogen cyanide = thiocyanate + sulfite + 2 H(+). Its function is as follows. Sulfur transferase that accepts persulfite from NFS1 and transfers it to UBA4 in the pathway for 2-thiolation of the wobble uridine base of tRNAs. Stimulates sulfur transfer by NFS1. Involved in metabolism of sterol esters in a tRNA thiolation pathway-independent manner. The polypeptide is Thiosulfate sulfurtransferase TUM1 (Saccharomyces cerevisiae (strain ATCC 204508 / S288c) (Baker's yeast)).